The following is a 343-amino-acid chain: MTYISRTMLWQRYLGTRISSTILPVAVRRIHYGGGRLQDPRYVFSKPPTNDPNQSKEGRDGKHFFTPSVNDGTENSTLHNNSRLSESEMSSIANAIAEQKRKRLKRSIITIFSAFVTAVLGYTIGYKVWYLKEQSFIPLYPCSRVRKLSTRDLRRVSVKKIEDISEVRVLERLSQHKMIQEEYGVPLRDSNGKAPHVSDFSVWCEDQDPCVTGLVFEPDSNRQSSHSWYRIPYVFKWRITHRPISISSFIDDVLNWINVSTSDLFEVISPEKVYGSFKYEYPIQGDNHSLHICFLGEMKLDENTTVIYKGKYHVDVKLERIDLLRTENKKLVRYILFKEEDEK.

A mitochondrion-targeting transit peptide spans methionine 1–arginine 29. Positions arginine 41–leucine 84 are disordered. The span at glutamine 54–histidine 63 shows a compositional bias: basic and acidic residues. Residues proline 67–leucine 84 show a composition bias toward polar residues. A helical transmembrane segment spans residues isoleucine 108–tyrosine 130.

Belongs to the AIM39 family.

It localises to the mitochondrion membrane. This Candida glabrata (strain ATCC 2001 / BCRC 20586 / JCM 3761 / NBRC 0622 / NRRL Y-65 / CBS 138) (Yeast) protein is Altered inheritance of mitochondria protein 39, mitochondrial (AIM39).